Reading from the N-terminus, the 330-residue chain is ADP-L-glycero-D-manno-heptose-6-epimerase (330 aa).

NADP(+) is bound by residues 11 to 12 (FI), 32 to 33 (DN), Lys39, Lys54, 75 to 79 (EGACS), and Asn92. Tyr139 functions as the Proton acceptor in the catalytic mechanism. Residue Lys143 participates in NADP(+) binding. Residue Asn168 participates in substrate binding. NADP(+) is bound by residues Val169 and Lys177. Lys177 acts as the Proton acceptor in catalysis. Substrate-binding positions include Arg179, His186, 200-203 (FGEY), Arg213, and Tyr292.

This sequence belongs to the NAD(P)-dependent epimerase/dehydratase family. HldD subfamily. As to quaternary structure, homopentamer. The cofactor is NADP(+).

It carries out the reaction ADP-D-glycero-beta-D-manno-heptose = ADP-L-glycero-beta-D-manno-heptose. It functions in the pathway nucleotide-sugar biosynthesis; ADP-L-glycero-beta-D-manno-heptose biosynthesis; ADP-L-glycero-beta-D-manno-heptose from D-glycero-beta-D-manno-heptose 7-phosphate: step 4/4. Catalyzes the interconversion between ADP-D-glycero-beta-D-manno-heptose and ADP-L-glycero-beta-D-manno-heptose via an epimerization at carbon 6 of the heptose. The polypeptide is ADP-L-glycero-D-manno-heptose-6-epimerase (Burkholderia cenocepacia (strain HI2424)).